We begin with the raw amino-acid sequence, 256 residues long: Protein FixA (256 aa).

It belongs to the ETF beta-subunit/FixA family. In terms of assembly, heterodimer of FixA and FixB.

It participates in amine and polyamine metabolism; carnitine metabolism. In terms of biological role, required for anaerobic carnitine reduction. May bring reductant to CaiA. This Escherichia coli O6:H1 (strain CFT073 / ATCC 700928 / UPEC) protein is Protein FixA.